Consider the following 627-residue polypeptide: uncharacterized protein (627 aa).

Residues 1 to 32 (MVDDSNYLTPHETALAVVATAMKKARLQLDTL) lie on the Extracellular side of the membrane. The chain crosses the membrane as a helical span at residues 33–53 (LINSILGGVLFSSGSFLLVAV). The Cytoplasmic segment spans residues 54–66 (YSEDPDIVARNPG). Residues 67–87 (IVNLITGVNFAMGLFYVVMMG) traverse the membrane as a helical segment. At 88–113 (ADLFNSNILFFSVGVLRKAVTIYDLM) the chain is on the extracellular side. Residues 114–134 (ISWVVSWLGNIAGSLFVSYLF) form a helical membrane-spanning segment. The Cytoplasmic segment spans residues 135 to 165 (GHLSGISSQKLWIIGSRQIIEQKVSYSFVQT). Residues 166-186 (FLKGIACNFFVCLAIYLQLMA) traverse the membrane as a helical segment. At 187-192 (KPIHVK) the chain is on the extracellular side. A helical transmembrane segment spans residues 193-213 (FILMSFPIIDFIGIGFTHVVG). Over 214-218 (DMSAS) the chain is Cytoplasmic. The chain crosses the membrane as a helical span at residues 219–239 (FIAMLNGANVSVGKYIWKLLI). The Extracellular segment spans residues 240–245 (PASLGN). The helical transmembrane segment at 246–266 (IVGGLFFSAVVPFYLHLVVVE) threads the bilayer. At 267 to 627 (RDRKRLSLPE…FYNRHTSPQL (361 aa)) the chain is on the cytoplasmic side. The residue at position 305 (Thr305) is a Phosphothreonine. Positions 512-537 (PPILPRTTQDTFPHNAPASSPAYTDD) are disordered. The span at 517-533 (RTTQDTFPHNAPASSPA) shows a compositional bias: polar residues. Ser546 carries the post-translational modification Phosphoserine. Thr588 is modified (phosphothreonine). Basic and acidic residues predominate over residues 605-614 (STTRRQKITE). The disordered stretch occupies residues 605–627 (STTRRQKITEPKNFYNRHTSPQL).

Belongs to the FNT transporter (TC 1.A.16) family.

It is found in the membrane. This is an uncharacterized protein from Saccharomyces cerevisiae (strain ATCC 204508 / S288c) (Baker's yeast).